The sequence spans 448 residues: Antilisterial bacteriocin subtilosin biosynthesis protein AlbA (448 aa).

The 215-residue stretch at 115–329 (FPMPLHATFE…EQHVIDEFKD (215 aa)) folds into the Radical SAM core domain. Positions 129, 133, 136, 408, 414, and 417 each coordinate [4Fe-4S] cluster.

It depends on [4Fe-4S] cluster as a cofactor.

The protein localises to the cytoplasm. In terms of biological role, catalyzes the formation of 3 thioether bonds during production of the sactipeptide subtilosin from SboA. In vitro the thioether bonds cannot be made in the absence of the SboA propeptide, suggesting this is the first reaction in subtilosin maturation. In vitro, in the absence of a second substrate, cleaves S-adenosyl-L-methionine into Met and 5'-dA. This is Antilisterial bacteriocin subtilosin biosynthesis protein AlbA (albA) from Bacillus subtilis (strain 168).